The chain runs to 186 residues: Peptide deformylase (186 aa).

2 residues coordinate Fe cation: cysteine 94 and histidine 136. The active site involves glutamate 137. A Fe cation-binding site is contributed by histidine 140.

It belongs to the polypeptide deformylase family. Requires Fe(2+) as cofactor.

It catalyses the reaction N-terminal N-formyl-L-methionyl-[peptide] + H2O = N-terminal L-methionyl-[peptide] + formate. Removes the formyl group from the N-terminal Met of newly synthesized proteins. Requires at least a dipeptide for an efficient rate of reaction. N-terminal L-methionine is a prerequisite for activity but the enzyme has broad specificity at other positions. This chain is Peptide deformylase, found in Prosthecochloris aestuarii (strain DSM 271 / SK 413).